The primary structure comprises 380 residues: Queuine tRNA-ribosyltransferase (380 aa).

Residue D96 is the Proton acceptor of the active site. Residues D96 to F100, D150, Q193, and G220 each bind substrate. The segment at G251 to S257 is RNA binding. The active-site Nucleophile is D270. Positions T275–R279 are RNA binding; important for wobble base 34 recognition. Residues C308, C310, C313, and H339 each coordinate Zn(2+).

This sequence belongs to the queuine tRNA-ribosyltransferase family. As to quaternary structure, homodimer. Within each dimer, one monomer is responsible for RNA recognition and catalysis, while the other monomer binds to the replacement base PreQ1. Requires Zn(2+) as cofactor.

It catalyses the reaction 7-aminomethyl-7-carbaguanine + guanosine(34) in tRNA = 7-aminomethyl-7-carbaguanosine(34) in tRNA + guanine. It participates in tRNA modification; tRNA-queuosine biosynthesis. Functionally, catalyzes the base-exchange of a guanine (G) residue with the queuine precursor 7-aminomethyl-7-deazaguanine (PreQ1) at position 34 (anticodon wobble position) in tRNAs with GU(N) anticodons (tRNA-Asp, -Asn, -His and -Tyr). Catalysis occurs through a double-displacement mechanism. The nucleophile active site attacks the C1' of nucleotide 34 to detach the guanine base from the RNA, forming a covalent enzyme-RNA intermediate. The proton acceptor active site deprotonates the incoming PreQ1, allowing a nucleophilic attack on the C1' of the ribose to form the product. After dissociation, two additional enzymatic reactions on the tRNA convert PreQ1 to queuine (Q), resulting in the hypermodified nucleoside queuosine (7-(((4,5-cis-dihydroxy-2-cyclopenten-1-yl)amino)methyl)-7-deazaguanosine). This is Queuine tRNA-ribosyltransferase from Streptococcus pneumoniae (strain ATCC BAA-255 / R6).